The chain runs to 142 residues: Chorion class A protein Ld19 (142 aa).

The N-terminal stretch at 1–18 is a signal peptide; the sequence is MNSFALLLVCIQACLVQS.

The protein belongs to the chorion protein family.

In terms of biological role, this protein is one of many from the eggshell of the gypsy moth. The sequence is that of Chorion class A protein Ld19 from Lymantria dispar (Gypsy moth).